Reading from the N-terminus, the 83-residue chain is Gas vesicle protein G (83 aa).

It belongs to the gas vesicle GvpG family. As to quaternary structure, gvpF to GvpM interact with each other in vitro, and may form multi-subunit complex(es).

The protein localises to the gas vesicle. Functionally, proteins GvpF to GvpM might be involved in nucleating gas vesicle formation. A minor component of the gas vesicle. Gas vesicles are hollow, gas filled proteinaceous nanostructures found in some microorganisms. They allow positioning of halobacteria at the optimal depth for growth in the poorly aerated, shallow brine pools of their habitat. Expression of a 9.5 kb mc-vac DNA fragment containing 2 divergently transcribed regions (gvpD-gvpE-gvpF-gvpG-gvpH-gvpI-gvpJ-gvpK-gvpL-gvpM and gvpA-gvpC-gvpN-gvpO) allows H.volcanii to produce gas vesicles. In Haloferax mediterranei (strain ATCC 33500 / DSM 1411 / JCM 8866 / NBRC 14739 / NCIMB 2177 / R-4) (Halobacterium mediterranei), this protein is Gas vesicle protein G.